A 456-amino-acid chain; its full sequence is Bifunctional protein GlmU (456 aa).

The pyrophosphorylase stretch occupies residues 1–230 (MDKRFAVVLA…FQETLGVNDR (230 aa)). UDP-N-acetyl-alpha-D-glucosamine is bound by residues 9–12 (LAAG), Lys23, Gln73, and 78–79 (GT). Asp103 provides a ligand contact to Mg(2+). Positions 140, 155, 170, and 228 each coordinate UDP-N-acetyl-alpha-D-glucosamine. Asn228 contacts Mg(2+). The tract at residues 231 to 251 (VALSQAEIYMKQRINKRHMQN) is linker. An N-acetyltransferase region spans residues 252–456 (GVSLIDPDNT…EDYAENIHKK (205 aa)). Residues Arg333 and Lys351 each coordinate UDP-N-acetyl-alpha-D-glucosamine. Residue His363 is the Proton acceptor of the active site. 2 residues coordinate UDP-N-acetyl-alpha-D-glucosamine: Tyr366 and Asn377. Residues 386–387 (NY), Ala423, and Arg440 each bind acetyl-CoA.

In the N-terminal section; belongs to the N-acetylglucosamine-1-phosphate uridyltransferase family. This sequence in the C-terminal section; belongs to the transferase hexapeptide repeat family. In terms of assembly, homotrimer. It depends on Mg(2+) as a cofactor.

It is found in the cytoplasm. It catalyses the reaction alpha-D-glucosamine 1-phosphate + acetyl-CoA = N-acetyl-alpha-D-glucosamine 1-phosphate + CoA + H(+). It carries out the reaction N-acetyl-alpha-D-glucosamine 1-phosphate + UTP + H(+) = UDP-N-acetyl-alpha-D-glucosamine + diphosphate. It functions in the pathway nucleotide-sugar biosynthesis; UDP-N-acetyl-alpha-D-glucosamine biosynthesis; N-acetyl-alpha-D-glucosamine 1-phosphate from alpha-D-glucosamine 6-phosphate (route II): step 2/2. The protein operates within nucleotide-sugar biosynthesis; UDP-N-acetyl-alpha-D-glucosamine biosynthesis; UDP-N-acetyl-alpha-D-glucosamine from N-acetyl-alpha-D-glucosamine 1-phosphate: step 1/1. Its pathway is bacterial outer membrane biogenesis; LPS lipid A biosynthesis. Functionally, catalyzes the last two sequential reactions in the de novo biosynthetic pathway for UDP-N-acetylglucosamine (UDP-GlcNAc). The C-terminal domain catalyzes the transfer of acetyl group from acetyl coenzyme A to glucosamine-1-phosphate (GlcN-1-P) to produce N-acetylglucosamine-1-phosphate (GlcNAc-1-P), which is converted into UDP-GlcNAc by the transfer of uridine 5-monophosphate (from uridine 5-triphosphate), a reaction catalyzed by the N-terminal domain. The protein is Bifunctional protein GlmU of Bacillus licheniformis (strain ATCC 14580 / DSM 13 / JCM 2505 / CCUG 7422 / NBRC 12200 / NCIMB 9375 / NCTC 10341 / NRRL NRS-1264 / Gibson 46).